Consider the following 141-residue polypeptide: Large ribosomal subunit protein uL16 (141 aa).

Belongs to the universal ribosomal protein uL16 family. In terms of assembly, part of the 50S ribosomal subunit.

In terms of biological role, binds 23S rRNA and is also seen to make contacts with the A and possibly P site tRNAs. The polypeptide is Large ribosomal subunit protein uL16 (Campylobacter lari (strain RM2100 / D67 / ATCC BAA-1060)).